The primary structure comprises 427 residues: UPF0761 membrane protein Cphamn1_1013 (427 aa).

The next 6 membrane-spanning stretches (helical) occupy residues 51 to 71 (LLSLIPLMAVVLSVLSVSPVF), 107 to 127 (TVPTVGGIFLLIIALFLISTI), 147 to 167 (FTLYWTVLTLGPIIIGSGLVA), 188 to 208 (ILSYLPLVNSFLAFFLLYMLV), 218 to 238 (AVSGAFLATWLFELSKQWFSF), and 251 to 271 (GALSVIPLLFFWIYLIWVVAL).

This sequence belongs to the UPF0761 family.

Its subcellular location is the cell inner membrane. This chain is UPF0761 membrane protein Cphamn1_1013, found in Chlorobium phaeobacteroides (strain BS1).